Reading from the N-terminus, the 216-residue chain is Large ribosomal subunit protein eL15 (216 aa).

Over residues R170–R188 the composition is skewed to basic residues. The disordered stretch occupies residues R170–A201. Over residues K189–A201 the composition is skewed to basic and acidic residues.

It belongs to the eukaryotic ribosomal protein eL15 family.

In Saccharolobus islandicus (strain M.16.27) (Sulfolobus islandicus), this protein is Large ribosomal subunit protein eL15.